We begin with the raw amino-acid sequence, 84 residues long: U8-theraphotoxin-Hhn1e (84 aa).

A signal peptide spans 1-21 (MKVVLLVCLVWMMAMMELVSC). 5 disulfides stabilise this stretch: Cys-23/Cys-35, Cys-29/Cys-44, Cys-34/Cys-67, Cys-54/Cys-75, and Cys-69/Cys-81.

Belongs to the AVIT (prokineticin) family. In terms of tissue distribution, expressed by the venom gland.

The protein resides in the secreted. The protein is U8-theraphotoxin-Hhn1e of Cyriopagopus hainanus (Chinese bird spider).